A 344-amino-acid chain; its full sequence is C5a anaphylatoxin chemotactic receptor 2 (344 aa).

The Extracellular portion of the chain corresponds to 1–44 (MMNHTTSEYYDYEYDHEHYSDLPDVPVDCPAGTCFTSDVYLIVL). An N-linked (GlcNAc...) asparagine glycan is attached at Asn3. A helical membrane pass occupies residues 45–67 (LVLYAAVFLVGVPGNTLVAWVTW). Topologically, residues 68–78 (KESRHRLGASW) are cytoplasmic. Residues 79–101 (FLHLTMADLLCCVSLPFLAVPIA) form a helical membrane-spanning segment. Residues 102-120 (QKGHWPYGAAGCWLLSSIT) are Extracellular-facing. Cys113 and Cys192 are oxidised to a cystine. A helical transmembrane segment spans residues 121–143 (ILSMYASVLLLTGLSGDLFLLAF). Over 144 to 155 (RPSWKGADHRTF) the chain is Cytoplasmic. A helical membrane pass occupies residues 156 to 178 (GVRVVQASSWMLGLLLTVPSAVY). Topologically, residues 179–208 (RRLLQEHYPPRLVCGIDYGGSVSAEVAITT) are extracellular. The chain crosses the membrane as a helical span at residues 209–231 (VRFLFGFLGPLVFMAGCHGILQR). The Cytoplasmic segment spans residues 232–243 (QMARRHWPLGTA). Residues 244 to 266 (VVVGFFICWTPYHVLRVIIAAAP) form a helical membrane-spanning segment. The Extracellular portion of the chain corresponds to 267–280 (PHSLLLARVLEAEP). Residues 281 to 300 (LFNGLALAHSALNPIMFLYF) form a helical membrane-spanning segment. Residues 301–344 (GRKQLCKSLQAACHWALRDPQDEESAVTKVSISTSHEMVSEMPV) are Cytoplasmic-facing. Ser325 is modified (phosphoserine).

It belongs to the G-protein coupled receptor 1 family. In terms of assembly, interacts with C3 (the anaphylatoxin peptide C3a and the adipogenic hormone ASP); the interaction occurs with higher affinity for ASP, enhancing the phosphorylation and activation of GPR77, recruitment of ARRB2 to the cell surface and endocytosis of GRP77. Highly expressed in liver and spleen. Lower levels in intestine, brain and kidney. Also expressed in adipose tissues with highest levels in gonadal and ingual fat depots. Lower levels in brown tissue.

Its subcellular location is the cell membrane. Its function is as follows. Receptor for the chemotactic and inflammatory C3a, C4a and C5a anaphylatoxin peptides and also for their dearginated forms ASP/C3adesArg, C4adesArg and C5adesArg respectively. Couples weakly to G(i)-mediated signaling pathways. The protein is C5a anaphylatoxin chemotactic receptor 2 (C5ar2) of Mus musculus (Mouse).